A 271-amino-acid chain; its full sequence is tRNA pseudouridine synthase A (271 aa).

The active-site Nucleophile is the aspartate 54. Tyrosine 112 is a substrate binding site.

Belongs to the tRNA pseudouridine synthase TruA family. Homodimer.

It carries out the reaction uridine(38/39/40) in tRNA = pseudouridine(38/39/40) in tRNA. In terms of biological role, formation of pseudouridine at positions 38, 39 and 40 in the anticodon stem and loop of transfer RNAs. This is tRNA pseudouridine synthase A from Acinetobacter baylyi (strain ATCC 33305 / BD413 / ADP1).